A 322-amino-acid polypeptide reads, in one-letter code: Pyridoxal kinase (322 aa).

The residue at position 1 (Met1) is an N-acetylmethionine. Residues Ser22 and Thr57 each contribute to the pyridoxal site. Pyridoxal 5'-phosphate is bound at residue Thr57. Ser69 is subject to Phosphoserine. Asp123 serves as a coordination point for ATP. Residue Asp123 coordinates Na(+). Residue Asp128 participates in Mg(2+) binding. Thr158 contributes to the Na(+) binding site. Asn160–Glu163 contacts ATP. The residue at position 174 (Ser174) is a Phosphoserine. Thr196 contacts Na(+). Position 196 to 197 (Thr196 to Ser197) interacts with ATP. Ser223 bears the Phosphoserine mark. ATP is bound by residues Val236–Ala238 and Thr243. Gly244–Asp245 lines the pyridoxal 5'-phosphate pocket. Asp245 serves as the catalytic Proton acceptor. At Ser295 the chain carries Phosphoserine.

Belongs to the pyridoxine kinase family. Homodimer. The cofactor is Zn(2+). It depends on Mg(2+) as a cofactor. The N-terminus is blocked.

Its subcellular location is the cytoplasm. It is found in the cytosol. The catalysed reaction is pyridoxal + ATP = pyridoxal 5'-phosphate + ADP + H(+). It carries out the reaction pyridoxamine + ATP = pyridoxamine 5'-phosphate + ADP + H(+). The enzyme catalyses pyridoxine + ATP = pyridoxine 5'-phosphate + ADP + H(+). The protein operates within cofactor metabolism; pyridoxal 5'-phosphate salvage; pyridoxal 5'-phosphate from pyridoxal: step 1/1. It functions in the pathway cofactor metabolism; pyridoxal 5'-phosphate salvage; pyridoxine 5'-phosphate from pyridoxine: step 1/1. Its pathway is cofactor metabolism; pyridoxal 5'-phosphate salvage; pyridoxamine 5'-phosphate from pyridoxamine: step 1/1. With respect to regulation, activity is increased in the presence of K(+)or Na(+). Its function is as follows. Catalyzes the phosphorylation of the dietary vitamin B6 vitamers pyridoxal (PL), pyridoxine (PN) and pyridoxamine (PM) to form pyridoxal 5'-phosphate (PLP), pyridoxine 5'-phosphate (PNP) and pyridoxamine 5'-phosphate (PMP), respectively. PLP is the active form of vitamin B6, and acts as a cofactor for over 140 different enzymatic reactions. This Sus scrofa (Pig) protein is Pyridoxal kinase (PDXK).